The chain runs to 441 residues: Chromosome partition protein MukF (441 aa).

A leucine-zipper region spans residues 208–236 (LDETSGNLRELQDTLNAAGDKLQAQLLRI).

This sequence belongs to the MukF family. Interacts, and probably forms a ternary complex, with MukE and MukB via its C-terminal region. The complex formation is stimulated by calcium or magnesium. It is required for an interaction between MukE and MukB.

The protein resides in the cytoplasm. The protein localises to the nucleoid. Its function is as follows. Involved in chromosome condensation, segregation and cell cycle progression. May participate in facilitating chromosome segregation by condensation DNA from both sides of a centrally located replisome during cell division. Not required for mini-F plasmid partitioning. Probably acts via its interaction with MukB and MukE. Overexpression results in anucleate cells. It has a calcium binding activity. The polypeptide is Chromosome partition protein MukF (Pasteurella multocida (strain Pm70)).